We begin with the raw amino-acid sequence, 104 residues long: Urease subunit beta (104 aa).

The protein belongs to the urease beta subunit family. In terms of assembly, heterotrimer of UreA (gamma), UreB (beta) and UreC (alpha) subunits. Three heterotrimers associate to form the active enzyme.

It localises to the cytoplasm. The catalysed reaction is urea + 2 H2O + H(+) = hydrogencarbonate + 2 NH4(+). The protein operates within nitrogen metabolism; urea degradation; CO(2) and NH(3) from urea (urease route): step 1/1. In Rhodococcus jostii (strain RHA1), this protein is Urease subunit beta.